The primary structure comprises 119 residues: UPF0212 protein Mlab_0931 (119 aa).

It belongs to the UPF0212 family.

This chain is UPF0212 protein Mlab_0931, found in Methanocorpusculum labreanum (strain ATCC 43576 / DSM 4855 / Z).